A 139-amino-acid polypeptide reads, in one-letter code: Large ribosomal subunit protein uL16 (139 aa).

Over residues 1–19 (MLIPRRVKYRKQHHPKRTG) the composition is skewed to basic residues. A disordered region spans residues 1 to 23 (MLIPRRVKYRKQHHPKRTGAAKG).

It belongs to the universal ribosomal protein uL16 family. Part of the 50S ribosomal subunit.

Functionally, binds 23S rRNA and is also seen to make contacts with the A and possibly P site tRNAs. The polypeptide is Large ribosomal subunit protein uL16 (Cutibacterium acnes (strain DSM 16379 / KPA171202) (Propionibacterium acnes)).